A 311-amino-acid polypeptide reads, in one-letter code: tRNA-cytidine(32) 2-sulfurtransferase (311 aa).

The PP-loop motif motif lies at 47–52 (SGGKDS). Residues cysteine 122, cysteine 125, and cysteine 213 each contribute to the [4Fe-4S] cluster site.

Belongs to the TtcA family. In terms of assembly, homodimer. Requires Mg(2+) as cofactor. [4Fe-4S] cluster serves as cofactor.

The protein localises to the cytoplasm. It catalyses the reaction cytidine(32) in tRNA + S-sulfanyl-L-cysteinyl-[cysteine desulfurase] + AH2 + ATP = 2-thiocytidine(32) in tRNA + L-cysteinyl-[cysteine desulfurase] + A + AMP + diphosphate + H(+). It participates in tRNA modification. Catalyzes the ATP-dependent 2-thiolation of cytidine in position 32 of tRNA, to form 2-thiocytidine (s(2)C32). The sulfur atoms are provided by the cysteine/cysteine desulfurase (IscS) system. The protein is tRNA-cytidine(32) 2-sulfurtransferase of Escherichia coli O127:H6 (strain E2348/69 / EPEC).